Consider the following 82-residue polypeptide: ATP synthase subunit c, chloroplastic (82 aa).

2 consecutive transmembrane segments (helical) span residues 3–23 (PIVAAASVIAAGLAVGLAAIG) and 57–77 (FAFMESLTIYGLVVALALLFA).

This sequence belongs to the ATPase C chain family. In terms of assembly, F-type ATPases have 2 components, F(1) - the catalytic core - and F(0) - the membrane proton channel. F(1) has five subunits: alpha(3), beta(3), gamma(1), delta(1), epsilon(1). F(0) has four main subunits: a(1), b(1), b'(1) and c(10-14). The alpha and beta chains form an alternating ring which encloses part of the gamma chain. F(1) is attached to F(0) by a central stalk formed by the gamma and epsilon chains, while a peripheral stalk is formed by the delta, b and b' chains.

It localises to the plastid. The protein localises to the chloroplast thylakoid membrane. In terms of biological role, f(1)F(0) ATP synthase produces ATP from ADP in the presence of a proton or sodium gradient. F-type ATPases consist of two structural domains, F(1) containing the extramembraneous catalytic core and F(0) containing the membrane proton channel, linked together by a central stalk and a peripheral stalk. During catalysis, ATP synthesis in the catalytic domain of F(1) is coupled via a rotary mechanism of the central stalk subunits to proton translocation. Its function is as follows. Key component of the F(0) channel; it plays a direct role in translocation across the membrane. A homomeric c-ring of between 10-14 subunits forms the central stalk rotor element with the F(1) delta and epsilon subunits. The chain is ATP synthase subunit c, chloroplastic from Chlorella vulgaris (Green alga).